The following is a 619-amino-acid chain: Chaperone protein DnaK (619 aa).

T175 carries the phosphothreonine; by autocatalysis modification. Positions 578-619 (NGGAQGQGFDPNNMGGANAGAGATNNNDDNVVDADFEVQDDK) are disordered. A compositionally biased stretch (low complexity) spans 589 to 606 (NNMGGANAGAGATNNNDD). Residues 607 to 619 (NVVDADFEVQDDK) show a composition bias toward acidic residues.

Belongs to the heat shock protein 70 family.

Its function is as follows. Acts as a chaperone. This is Chaperone protein DnaK from Clostridium perfringens (strain ATCC 13124 / DSM 756 / JCM 1290 / NCIMB 6125 / NCTC 8237 / Type A).